A 264-amino-acid chain; its full sequence is Glutamate racemase (264 aa).

Residues 10–11 (DS) and 42–43 (YG) each bind substrate. The active-site Proton donor/acceptor is the Cys73. Position 74-75 (74-75 (NT)) interacts with substrate. The Proton donor/acceptor role is filled by Cys183. Substrate is bound at residue 184-185 (TH).

Belongs to the aspartate/glutamate racemases family.

The enzyme catalyses L-glutamate = D-glutamate. It functions in the pathway cell wall biogenesis; peptidoglycan biosynthesis. Its function is as follows. Provides the (R)-glutamate required for cell wall biosynthesis. The chain is Glutamate racemase from Streptococcus pyogenes serotype M3 (strain ATCC BAA-595 / MGAS315).